The following is a 1016-amino-acid chain: Calmodulin-binding transcription activator 4 (1016 aa).

The segment at residues 38 to 164 (ISTLYQEAHS…YRDVSEREEG (127 aa)) is a DNA-binding region (CG-1). Positions 324-343 (KNGSGPSGGTGGSGDQGSES) are disordered. Residues 328 to 338 (GPSGGTGGSGD) are compositionally biased toward gly residues. ANK repeat units follow at residues 647–676 (QEQG…NVDF), 680–709 (KGWS…SAGA), and 719–748 (NGKT…TNHL). Residues 753 to 786 (LEETENSKDTAQVQTEKTLNSISEQSPSGNEDQV) form a disordered region. Over residues 761 to 785 (DTAQVQTEKTLNSISEQSPSGNEDQ) the composition is skewed to polar residues. 3 IQ domains span residues 798–827 (AAQA…LVAC), 855–884 (YNSA…KVVK), and 878–907 (LRQK…AVRI). The calmodulin-binding stretch occupies residues 903 to 925 (WAVRILDKVVLRWRRKGVGLRGF). Phosphoserine occurs at positions 935 and 962.

It belongs to the CAMTA family. Expressed in roots, stems, leaves, flowers and siliques.

The protein resides in the nucleus. Its function is as follows. Transcription activator that binds to the DNA consensus sequence 5'-[ACG]CGCG[GTC]-3'. Regulates transcriptional activity in response to calcium signals. Binds calmodulin in a calcium-dependent manner. Involved together with CAMTA2 and CAMTA3 in the positive regulation of a general stress response. The sequence is that of Calmodulin-binding transcription activator 4 from Arabidopsis thaliana (Mouse-ear cress).